Consider the following 154-residue polypeptide: RING finger protein 11 (154 aa).

Over residues 1–12 (MGNCLKSPTSDD) the composition is skewed to polar residues. Residues 1 to 52 (MGNCLKSPTSDDISLLHESQSDRASFGEGTEPDQEPPPPYQEQVPVPIYHPT) are disordered. A lipid anchor (N-myristoyl glycine) is attached at glycine 2. The S-palmitoyl cysteine moiety is linked to residue cysteine 4. A phosphoserine mark is found at serine 14 and serine 25. The PPxY motif motif lies at 37–40 (PPPY). The RING-type zinc finger occupies 99 to 140 (CVICMMDFVYGDPIRFLPCMHIYHLDCIDDWLMRSFTCPSCM). Residue threonine 135 is modified to Phosphothreonine; by PKB/AKT1.

Interacts (when phosphorylated) with 14-3-3. Interacts with the E3 ubiquitin-ligases NEDD4, ITCH, SMURF2 and WWP1. Also interacts with the E2 ubiquitin-conjugating enzymes UBE2D1 and UBE2N, but neither with CDC34, nor with UBE2L3. Interacts with ZNF350, EPS15 and STAMBP. After TNF stimulation, interacts with TAX1BP1, TNFAIP3 and RIPK1; these interactions are transient and they are lost after 1 hour of stimulation with TNF. Interacts with GGA1. Ubiquitinated in the presence of ITCH, SMURF2 and UBE2D1, as well as WWP1. In terms of processing, phosphorylation by PKB/AKT1 may accelerate degradation by the proteasome. Post-translationally, acylation at both Gly-2 and Cys-4 is required for proper localization to the endosomes.

It localises to the early endosome. It is found in the recycling endosome. The protein resides in the cytoplasm. The protein localises to the nucleus. Essential component of a ubiquitin-editing protein complex, comprising also TNFAIP3, ITCH and TAX1BP1, that ensures the transient nature of inflammatory signaling pathways. Promotes the association of TNFAIP3 to RIPK1 after TNF stimulation. TNFAIP3 deubiquitinates 'Lys-63' polyubiquitin chains on RIPK1 and catalyzes the formation of 'Lys-48'-polyubiquitin chains. This leads to RIPK1 proteasomal degradation and consequently termination of the TNF- or LPS-mediated activation of NF-kappa-B. Recruits STAMBP to the E3 ubiquitin-ligase SMURF2 for ubiquitination, leading to its degradation by the 26S proteasome. In Mus musculus (Mouse), this protein is RING finger protein 11 (Rnf11).